Consider the following 302-residue polypeptide: Lipoyl synthase (302 aa).

[4Fe-4S] cluster is bound by residues C44, C49, C55, C70, C74, C77, and S283. The region spanning 56 to 272 (WSKKHATVMI…ARVAKSKGFL (217 aa)) is the Radical SAM core domain.

It belongs to the radical SAM superfamily. Lipoyl synthase family. [4Fe-4S] cluster serves as cofactor.

The protein resides in the cytoplasm. The enzyme catalyses [[Fe-S] cluster scaffold protein carrying a second [4Fe-4S](2+) cluster] + N(6)-octanoyl-L-lysyl-[protein] + 2 oxidized [2Fe-2S]-[ferredoxin] + 2 S-adenosyl-L-methionine + 4 H(+) = [[Fe-S] cluster scaffold protein] + N(6)-[(R)-dihydrolipoyl]-L-lysyl-[protein] + 4 Fe(3+) + 2 hydrogen sulfide + 2 5'-deoxyadenosine + 2 L-methionine + 2 reduced [2Fe-2S]-[ferredoxin]. It participates in protein modification; protein lipoylation via endogenous pathway; protein N(6)-(lipoyl)lysine from octanoyl-[acyl-carrier-protein]: step 2/2. In terms of biological role, catalyzes the radical-mediated insertion of two sulfur atoms into the C-6 and C-8 positions of the octanoyl moiety bound to the lipoyl domains of lipoate-dependent enzymes, thereby converting the octanoylated domains into lipoylated derivatives. This Orientia tsutsugamushi (strain Ikeda) (Rickettsia tsutsugamushi) protein is Lipoyl synthase.